The following is a 73-amino-acid chain: UPF0235 protein HY04AAS1_1378 (73 aa).

It belongs to the UPF0235 family.

This chain is UPF0235 protein HY04AAS1_1378, found in Hydrogenobaculum sp. (strain Y04AAS1).